A 261-amino-acid chain; its full sequence is Putative quercetin 2,3-dioxygenase Ta0133 (261 aa).

Residues His-17, His-19, His-61, and Glu-63 each coordinate a divalent metal cation.

It belongs to the pirin family. Requires a divalent metal cation as cofactor.

The enzyme catalyses quercetin + O2 = 2-(3,4-dihydroxybenzoyloxy)-4,6-dihydroxybenzoate + CO. It participates in flavonoid metabolism; quercetin degradation. Putative quercetin 2,3-dioxygenase. This is Putative quercetin 2,3-dioxygenase Ta0133 from Thermoplasma acidophilum (strain ATCC 25905 / DSM 1728 / JCM 9062 / NBRC 15155 / AMRC-C165).